The sequence spans 335 residues: tRNA pseudouridine synthase D (335 aa).

The active-site Nucleophile is D77. The TRUD domain occupies 152-308 (GFPNYFTEQR…AQNLNWQFEP (157 aa)).

It belongs to the pseudouridine synthase TruD family.

The catalysed reaction is uridine(13) in tRNA = pseudouridine(13) in tRNA. Responsible for synthesis of pseudouridine from uracil-13 in transfer RNAs. This is tRNA pseudouridine synthase D from Actinobacillus succinogenes (strain ATCC 55618 / DSM 22257 / CCUG 43843 / 130Z).